A 157-amino-acid polypeptide reads, in one-letter code: Small ribosomal subunit protein uS7 (157 aa).

It belongs to the universal ribosomal protein uS7 family. Part of the 30S ribosomal subunit. Contacts proteins S9 and S11.

Functionally, one of the primary rRNA binding proteins, it binds directly to 16S rRNA where it nucleates assembly of the head domain of the 30S subunit. Is located at the subunit interface close to the decoding center, probably blocks exit of the E-site tRNA. This Desulfotalea psychrophila (strain LSv54 / DSM 12343) protein is Small ribosomal subunit protein uS7.